Here is an 84-residue protein sequence, read N- to C-terminus: Tripartite terminase subunit 2 (84 aa).

This sequence belongs to the herpesviridae TRM2 protein family. Associates with TRM1 and TRM3 to form the tripartite terminase complex.

It is found in the host nucleus. Functionally, component of the molecular motor that translocates viral genomic DNA in empty capsid during DNA packaging. Forms a tripartite terminase complex together with TRM1 and TRM3 in the host cytoplasm. Once the complex reaches the host nucleus, it interacts with the capsid portal vertex. This portal forms a ring in which genomic DNA is translocated into the capsid. The sequence is that of Tripartite terminase subunit 2 from Alcelaphine herpesvirus 1 (strain C500) (AlHV-1).